A 443-amino-acid chain; its full sequence is Thymidine phosphorylase (443 aa).

The protein belongs to the thymidine/pyrimidine-nucleoside phosphorylase family. As to quaternary structure, homodimer.

The catalysed reaction is thymidine + phosphate = 2-deoxy-alpha-D-ribose 1-phosphate + thymine. Its pathway is pyrimidine metabolism; dTMP biosynthesis via salvage pathway; dTMP from thymine: step 1/2. The enzymes which catalyze the reversible phosphorolysis of pyrimidine nucleosides are involved in the degradation of these compounds and in their utilization as carbon and energy sources, or in the rescue of pyrimidine bases for nucleotide synthesis. The chain is Thymidine phosphorylase from Shewanella sp. (strain MR-7).